We begin with the raw amino-acid sequence, 1343 residues long: Vascular endothelial growth factor receptor 2 (1343 aa).

The signal sequence occupies residues 1-19 (MESRALLAVALWFCVETRA). Topologically, residues 20-760 (ASVGLPGDSL…EGVQEKTNLE (741 aa)) are extracellular. 5 N-linked (GlcNAc...) asparagine glycosylation sites follow: N46, N96, N143, N158, and N245. Ig-like C2-type domains are found at residues 46-109 (NTTL…RDTD), 141-207 (NKNK…INDE), 224-320 (YDVV…KNKT), 328-414 (PFIA…HMVS), 421-540 (PQIG…RVIS), 547-654 (PEIT…LVKQ), and 663-749 (PMIT…TLFI). The cysteines at positions 53 and 103 are disulfide-linked. Cysteines 150 and 200 form a disulfide. C246 and C307 are oxidised to a cystine. Residues N318, N374, N395, N507, N576, N609, N615, N627, N671, N700, and N717 are each glycosylated (N-linked (GlcNAc...) asparagine). 2 cysteine pairs are disulfide-bonded: C445-C526 and C567-C638. C684 and C733 are oxidised to a cystine. Residues 761 to 781 (VIILVGTAVIAMFFWLLLVIL) form a helical membrane-spanning segment. Topologically, residues 782–1343 (VRTVKRANEG…SGTTLRSSPV (562 aa)) are cytoplasmic. Phosphotyrosine is present on Y797. A Protein kinase domain is found at 830-1158 (LKLGKPLGRG…FSELVEHLGN (329 aa)). ATP contacts are provided by residues 836–844 (LGRGAFGQV) and K864. Y947 carries the phosphotyrosine; by autocatalysis modification. S978 and S980 each carry phosphoserine. The residue at position 992 (Y992) is a Phosphotyrosine; by autocatalysis. The cysteines at positions 1020 and 1041 are disulfide-linked. The active-site Proton acceptor is D1024. A phosphotyrosine; by autocatalysis mark is found at Y1050, Y1055, Y1171, and Y1210. Phosphoserine occurs at positions 1227 and 1231. A Phosphothreonine modification is found at T1234. The interval 1267-1314 (TLEDRNKLSPSFGGMMPSKSRESVASEGSNQTSGYQSGYHSDDTDTTV) is disordered. Over residues 1292–1305 (SEGSNQTSGYQSGY) the composition is skewed to polar residues. 3 positions are modified to phosphotyrosine; by autocatalysis: Y1301, Y1305, and Y1315.

The protein belongs to the protein kinase superfamily. Tyr protein kinase family. CSF-1/PDGF receptor subfamily. Homodimer in the presence of bound dimeric VEGFA, VEGFC or VEGFD ligands; monomeric in the absence of bound ligands. Can also form heterodimers with FLT1/VEGFR1 and KDR/VEGFR2. Interacts (tyrosine phosphorylated) with LFYN, NCK1, PLCG1. Interacts (tyrosine-phosphorylated active form preferentially) with DAB2IP (via C2 domain and active form preferentially); the interaction occurs at the late phase of VEGFA response and inhibits KDR/VEGFR2 activity. Interacts with SHBSH2D2A/TSAD, GRB2, MYOF, CBL and PDCD6. Interacts (via C-terminus domain) with ERN1 (via kinase domain); the interaction is facilitated in a XBP1- and vascular endothelial growth factor (VEGF)-dependent manner in endothelial cells. Interacts (via juxtamembrane region) with chaperone PDCL3 (via thioredoxin fold region); the interaction leads to increased KDR/VEGFR2 abundance through inhibition of its ubiquitination and degradation. Interacts (tyrosine phosphorylated) with CCDC88A/GIV (via SH2-like region); binding requires autophosphorylation of the KDR/VEGFR2 C-terminal region. Interacts with isoform 2 of BSG. Interacts with SLC31A1; this interaction is induced upon VEGFA stimulation leading to SLC31A1 and KDR subsequent co-internalization to early endosomes, thereby activating KDR downstream signaling in endothelial cells. N-glycosylated. In terms of processing, ubiquitinated. Tyrosine phosphorylation of the receptor promotes its poly-ubiquitination, leading to its degradation via the proteasome or lysosomal proteases. Post-translationally, autophosphorylated on tyrosine residues upon ligand binding. Autophosphorylation occurs in trans, i.e. one subunit of the dimeric receptor phosphorylates tyrosine residues on the other subunit. Phosphorylation at Tyr-947 is important for interaction with SH2D2A/TSAD and VEGFA-mediated reorganization of the actin cytoskeleton. Phosphorylation at Tyr-1171 is important for interaction with PLCG1 and SHB. Phosphorylation at Tyr-1210 is important for interaction with NCK1 and FYN. Dephosphorylated by PTPRB. Dephosphorylated by PTPRJ at Tyr-797, Tyr-947, Tyr-992, Tyr-1050, Tyr-1055, Tyr-1171 and Tyr-1210. The inhibitory disulfide bond between Cys-1020 and Cys-1041 may serve as a specific molecular switch for H(2)S-induced modification that regulates KDR/VEGFR2 function. As to expression, expressed in the post-pubertal mammary glands.

The protein localises to the cell membrane. It localises to the cytoplasm. Its subcellular location is the nucleus. The protein resides in the cytoplasmic vesicle. It is found in the early endosome. The protein localises to the cell junction. It localises to the endoplasmic reticulum. It catalyses the reaction L-tyrosyl-[protein] + ATP = O-phospho-L-tyrosyl-[protein] + ADP + H(+). Its activity is regulated as follows. Present in an inactive conformation in the absence of bound ligand. Binding of VEGFA, VEGFC or VEGFD leads to dimerization and activation by autophosphorylation on tyrosine residues. May be regulated by hydrogen sulfide (H(2)S) levels via a sensitive intracellular disulfide bond. Tyrosine-protein kinase that acts as a cell-surface receptor for VEGFA, VEGFC and VEGFD. Plays an essential role in the regulation of angiogenesis, vascular development, vascular permeability, and embryonic hematopoiesis. Promotes proliferation, survival, migration and differentiation of endothelial cells. Promotes reorganization of the actin cytoskeleton. Isoforms lacking a transmembrane domain may function as decoy receptors for VEGFA, VEGFC and/or VEGFD. Modulates FLT1 and FLT4 signaling by forming heterodimers. Binding of vascular growth factors to isoform 1 leads to the activation of several signaling cascades. Activation of PLCG1 leads to the production of the cellular signaling molecules diacylglycerol and inositol-1,4,5-trisphosphate and the activation of protein kinase C. Mediates activation of MAPK1/ERK2, MAPK3/ERK1 and the MAP kinase signaling pathway, as well as of the AKT1 signaling pathway. Mediates phosphorylation of PIK3R1, the regulatory subunit of phosphatidylinositol 3-kinase, reorganization of the actin cytoskeleton and activation of PTK2/FAK1. Required for VEGFA-mediated induction of NOS2 and NOS3, leading to the production of the signaling molecule nitric oxide (NO) by endothelial cells. Phosphorylates PLCG1. Promotes phosphorylation of FYN, NCK1, NOS3, PIK3R1, PTK2/FAK1 and SRC. In Rattus norvegicus (Rat), this protein is Vascular endothelial growth factor receptor 2.